An 886-amino-acid polypeptide reads, in one-letter code: cytokinesis protein 3 (886 aa).

The 62-residue stretch at 6 to 67 (QLPCMVRALY…PSNFVHCLDI (62 aa)) folds into the SH3 domain. Residues 72-88 (PGSSMSRTSASSFRYSS) are compositionally biased toward low complexity. The tract at residues 72 to 189 (PGSSMSRTSA…DLSRSTPSPL (118 aa)) is disordered. A compositionally biased stretch (polar residues) spans 89–104 (PQKSSIDTPITSSDQG). Positions 135 to 154 (LNSLGSSLSLKKSVSRPPSS) are enriched in low complexity. The segment covering 155 to 188 (MSRTNLDVSSRWDNTADNDSQIDAQDLSRSTPSP) has biased composition (polar residues). At S213 the chain carries Phosphoserine. 2 disordered regions span residues 219–290 (TKST…SPSD) and 358–393 (RRGS…SPHT). A compositionally biased stretch (polar residues) spans 253-264 (DNSSKPRTSLQP).

It belongs to the CYK3 family.

It is found in the cell tip. Its function is as follows. Involved in cytokinesis. This chain is cytokinesis protein 3 (cyk3), found in Schizosaccharomyces pombe (strain 972 / ATCC 24843) (Fission yeast).